A 500-amino-acid chain; its full sequence is Transcription factor-like 5 protein (500 aa).

2 stretches are compositionally biased toward pro residues: residues 1–12 (MSGPGPREPPPE) and 196–210 (AEPP…PPEP). 2 disordered regions span residues 1 to 34 (MSGP…ALGE) and 191 to 211 (FNSI…PEPG). The tract at residues 347 to 356 (MRQLDTNVER) is R3 epitope (recognized by Chagas's antibodies). The disordered stretch occupies residues 365-410 (VGEGATATQGAWQSSESSQANLGEQAQSGPQGGRSQRRERHNRMER). Over residues 370 to 393 (TATQGAWQSSESSQANLGEQAQSG) the composition is skewed to polar residues. In terms of domain architecture, bHLH spans 400 to 450 (QRRERHNRMERDRRRRIRICCDELNLLVPFCNAETDKATTLQWTTAFLKYI). The R1 epitope (recognized by Chagas's antibodies) stretch occupies residues 481–500 (SLVTCPAQGSLQSSPSMEIK).

As to quaternary structure, efficient DNA binding requires dimerization with another bHLH protein. Isoform 3 is testis specific. Isoform 2 is pancreas specific.

It is found in the nucleus. Functionally, putative transcription factor. Isoform 3 may play a role in early spermatogenesis. The protein is Transcription factor-like 5 protein (TCFL5) of Homo sapiens (Human).